The primary structure comprises 676 residues: Envelope glycoprotein (676 aa).

The signal sequence occupies residues 1 to 32 (MGVTGILQLPRDRFKRTSFFLWVIILFQRTFS). Over 33–650 (IPLGVIHNST…NDNWWTGWRQ (618 aa)) the chain is Extracellular. N40 carries N-linked (GlcNAc...) asparagine; by host glycosylation. Disulfide bonds link C53-C609, C108-C135, C121-C147, C511-C556, and C601-C608. Residues 54-201 (RDKLSSTNQL…DFFSSHPLRE (148 aa)) form a receptor-binding region. Residues N204, N228, N238, N257, N268, N296, N317, N333, N346, N386, and N413 are each glycosylated (N-linked (GlcNAc...) asparagine; by host). The mucin-like region stretch occupies residues 305–485 (ELSFTVVSNG…SGKLGLITNT (181 aa)). The span at 315-335 (AKNISGQSPARTSSDPGTNTT) shows a compositional bias: polar residues. The disordered stretch occupies residues 315–337 (AKNISGQSPARTSSDPGTNTTTE). The segment covering 373–391 (TSPQSLTTKPGPDNSTHNT) has biased composition (polar residues). Disordered stretches follow at residues 373 to 392 (TSPQSLTTKPGPDNSTHNTP) and 402 to 479 (TQVE…SGKL). The segment covering 414-432 (DSTASDTPSATTAAGPPKA) has biased composition (low complexity). The segment covering 433–464 (ENTNTSKSTDFLDPATTTSPQNHSETAGNNNT) has biased composition (polar residues). 3 N-linked (GlcNAc...) asparagine; by host glycosylation sites follow: N436, N454, and N462. The tract at residues 524–539 (GAAIGLAWIPYFGPAA) is fusion peptide. A coiled-coil region spans residues 554–595 (LICGLRQLANETTQALQLFLRATTELRTFSILNRKAIDFLLQ). N563 carries an N-linked (GlcNAc...) asparagine; by host glycan. The stretch at 615–634 (WTKNITDKIDQIIHDFVDKT) forms a coiled coil. A glycan (N-linked (GlcNAc...) asparagine; by host) is linked at N618. The chain crosses the membrane as a helical span at residues 651–671 (WIPAGIGVTGVIIAVIALFCI). Residues C670 and C672 are each lipidated (S-palmitoyl cysteine; by host). At 672 to 676 (CKFVF) the chain is on the cytoplasmic side.

It belongs to the filoviruses glycoprotein family. Homotrimer; each monomer consists of a GP1 and a GP2 subunit linked by disulfide bonds. The resulting peplomers (GP1,2) protrude from the virus surface as spikes. Interacts with host integrin alpha-V/ITGAV. Interacts with host CLEC10A. Binds also to host CD209 and CLEC4M/DC-SIGN(R). Interacts with host FOLR1. Interacts with BST2; this interaction inhibits the antiviral effect of BST2 and this allows viral release from infected cells. Interacts with host FCN1; this interaction enhances viral entry. Interacts with host TLR4; this interaction induces cell death in T-lymphocytes or proinflammatory cytokines and SOCS1 production in monocytes. In terms of assembly, interacts with host entry receptor NPC1. As to quaternary structure, GP1 and GP2delta are part of GP1,2delta soluble complexes released by ectodomain shedding. Post-translationally, the signal peptide region modulates GP's high mannose glycosylation, thereby determining the efficiency of the interactions with DC-SIGN(R). In terms of processing, N-glycosylated. O-glycosylated in the mucin-like region. Post-translationally, palmitoylation of GP2 is not required for its function. In terms of processing, specific enzymatic cleavages in vivo yield mature proteins. The precursor is processed into GP1 and GP2 by host cell furin in the trans Golgi, and maybe by other host proteases, to yield the mature GP1 and GP2 proteins. The cleavage site corresponds to the furin optimal cleavage sequence [KR]-X-[KR]-R. This cleavage does not seem to be required for function. After the internalization of the virus into cell endosomes, GP1 C-terminus is removed by the endosomal proteases cathepsin B, cathepsin L, or both, leaving a 19-kDa N-terminal fragment which is further digested by cathepsin B. Proteolytic processing of GP1,2 by host ADAM17 can remove the transmembrane anchor of GP2 and leads to shedding of complexes consisting in GP1 and truncated GP2 (GP1,2delta).

The protein localises to the virion membrane. It is found in the host cell membrane. It localises to the secreted. Functionally, trimeric GP1,2 complexes form the virion surface spikes and mediate the viral entry processes, with GP1 acting as the receptor-binding subunit and GP2 as the membrane fusion subunit. At later times of infection, down-regulates the expression of various host cell surface molecules that are essential for immune surveillance and cell adhesion. Down-modulates several integrins including ITGA1, ITGA2, ITGA3, ITGA4, ITGA5, ITGA6, ITGAV and ITGB1. This decrease in cell adhesion molecules may lead to cell detachment, contributing to the disruption of blood vessel integrity and hemorrhages developed during infection (cytotoxicity). Interacts with host TLR4 and thereby stimulates the differentiation and activation of monocytes leading to bystander death of T-lymphocytes. Down-regulates as well the function of host natural killer cells. Counteracts the antiviral effect of host BST2/tetherin that restricts release of progeny virions from infected cells. However, cooperates with VP40 and host BST2 to activate canonical NF-kappa-B pathway in a manner dependent on neddylation. In terms of biological role, functions as a decoy for anti-GP1,2 antibodies thereby contributing to viral immune evasion. Interacts and activates host macrophages and dendritic cells inducing up-regulation of cytokine transcription. This effect is mediated throught activation of host TLR4. Responsible for binding to the receptor(s) on target cells. Interacts with CD209/DC-SIGN and CLEC4M/DC-SIGNR which act as cofactors for virus entry into dendritic cells (DCs) and endothelial cells. Binding to the macrophage specific lectin CLEC10A also seems to enhance virus infectivity. Interaction with FOLR1/folate receptor alpha may be a cofactor for virus entry in some cell types, although results are contradictory. Members of the Tyro3 receptor tyrosine kinase family also seem to be cell entry factors in filovirus infection. Once attached, the virions are internalized through clathrin-dependent endocytosis and/or macropinocytosis. After internalization of the virus into the endosomes of the host cell, proteolysis of GP1 by two cysteine proteases, CTSB/cathepsin B and CTSL/cathepsin L removes the glycan cap and allows GP1 binding to the host entry receptor NPC1. NPC1-binding, Ca(2+) and acidic pH induce a conformational change of GP2, which unmasks its fusion peptide and permit membranes fusion. Its function is as follows. Acts as a class I viral fusion protein. Under the current model, the protein has at least 3 conformational states: pre-fusion native state, pre-hairpin intermediate state, and post-fusion hairpin state. During viral and target cell membrane fusion, the coiled coil regions (heptad repeats) assume a trimer-of-hairpins structure, positioning the fusion peptide in close proximity to the C-terminal region of the ectodomain. The formation of this structure appears to drive apposition and subsequent fusion of viral and target cell membranes. Responsible for penetration of the virus into the cell cytoplasm by mediating the fusion of the membrane of the endocytosed virus particle with the endosomal membrane. Low pH in endosomes induces an irreversible conformational change in GP2, releasing the fusion hydrophobic peptide. The sequence is that of Envelope glycoprotein (GP) from Epomops franqueti (Franquet's epauletted fruit bat).